We begin with the raw amino-acid sequence, 263 residues long: uncharacterized protein (263 aa).

It belongs to the A.longa ORF167/ORF288 family.

The protein resides in the plastid. This is an uncharacterized protein from Euglena longa (Euglenophycean alga).